A 141-amino-acid polypeptide reads, in one-letter code: Hemoglobin subunit alpha (141 aa).

Residues 1–141 (VLSAADKTNV…VATVLTSKYR (141 aa)) form the Globin domain. Residue serine 3 is modified to Phosphoserine. Lysine 7 is subject to N6-succinyllysine. Threonine 8 carries the post-translational modification Phosphothreonine. Lysine 11 bears the N6-succinyllysine mark. At lysine 16 the chain carries N6-acetyllysine; alternate. An N6-succinyllysine; alternate modification is found at lysine 16. Tyrosine 24 carries the phosphotyrosine modification. Serine 35 carries the post-translational modification Phosphoserine. At lysine 40 the chain carries N6-succinyllysine. Phosphoserine is present on serine 49. Histidine 58 is a binding site for O2. Histidine 87 contacts heme b. Serine 102 is modified (phosphoserine). Residue threonine 108 is modified to Phosphothreonine. Serine 124 carries the phosphoserine modification. Phosphothreonine is present on residues threonine 134 and threonine 137. Serine 138 is modified (phosphoserine).

The protein belongs to the globin family. In terms of assembly, heterotetramer of two alpha chains and two beta chains. In terms of tissue distribution, red blood cells.

Involved in oxygen transport from the lung to the various peripheral tissues. Functionally, hemopressin acts as an antagonist peptide of the cannabinoid receptor CNR1. Hemopressin-binding efficiently blocks cannabinoid receptor CNR1 and subsequent signaling. This is Hemoglobin subunit alpha (HBA) from Ctenodactylus gundi (Northern gundi).